The chain runs to 206 residues: Ras-related protein Rab-18 (206 aa).

GTP contacts are provided by S17, G20, K21, S22, S23, D34, P35, T40, G66, K123, D125, and A152. S22 provides a ligand contact to Mg(2+). Short sequence motifs (switch) lie at residues 31 to 45 and 63 to 80; these read DTFD…GVDF and DTAG…YYRG. T40 provides a ligand contact to Mg(2+). C199 is lipidated: S-palmitoyl cysteine. Cysteine methyl ester is present on C203. The S-geranylgeranyl cysteine moiety is linked to residue C203. Residues 204-206 constitute a propeptide, removed in mature form; that stretch reads SML.

The protein belongs to the small GTPase superfamily. Rab family. The cofactor is Mg(2+).

It is found in the endoplasmic reticulum membrane. It localises to the golgi apparatus. Its subcellular location is the cis-Golgi network membrane. The protein resides in the lipid droplet. The protein localises to the apical cell membrane. It carries out the reaction GTP + H2O = GDP + phosphate + H(+). Its activity is regulated as follows. Regulated by guanine nucleotide exchange factors (GEFs) which promote the exchange of bound GDP for free GTP. Regulated by GTPase activating proteins (GAPs) which increase the GTP hydrolysis activity at the ER membrane. Inhibited by GDP dissociation inhibitors (GDIs) which prevent Rab-GDP dissociation. In terms of biological role, the small GTPases Rab are key regulators of intracellular membrane trafficking, from the formation of transport vesicles to their fusion with membranes. Rabs cycle between an inactive GDP-bound form and an active GTP-bound form that is able to recruit to membranes different sets of downstream effectors directly responsible for vesicle formation, movement, tethering and fusion. RAB18 is required for the localization of ZFYVE1 to lipid droplets and for its function in mediating the formation of endoplasmic reticulum-lipid droplets (ER-LD) contacts. Also required for maintaining endoplasmic reticulum structure. Plays a role in apical endocytosis/recycling. Plays a key role in eye and brain development and neurodegeneration. The polypeptide is Ras-related protein Rab-18 (RAB18) (Gallus gallus (Chicken)).